Consider the following 424-residue polypeptide: UPF0229 protein YPTS_2141 (424 aa).

The disordered stretch occupies residues 84–109 (TNDRVDRPQGGGGGGSGQGNAGKDGE). Gly residues predominate over residues 92–105 (QGGGGGGSGQGNAG).

Belongs to the UPF0229 family.

This is UPF0229 protein YPTS_2141 from Yersinia pseudotuberculosis serotype IB (strain PB1/+).